The chain runs to 545 residues: Glucose-6-phosphate isomerase (545 aa).

Residue E353 is the Proton donor of the active site. Residues H384 and K510 contribute to the active site.

The protein belongs to the GPI family.

Its subcellular location is the cytoplasm. The enzyme catalyses alpha-D-glucose 6-phosphate = beta-D-fructose 6-phosphate. The protein operates within carbohydrate biosynthesis; gluconeogenesis. Its pathway is carbohydrate degradation; glycolysis; D-glyceraldehyde 3-phosphate and glycerone phosphate from D-glucose: step 2/4. Functionally, catalyzes the reversible isomerization of glucose-6-phosphate to fructose-6-phosphate. In Aromatoleum aromaticum (strain DSM 19018 / LMG 30748 / EbN1) (Azoarcus sp. (strain EbN1)), this protein is Glucose-6-phosphate isomerase.